The primary structure comprises 146 residues: Putative phosphotransferase enzyme IIA component YadI (146 aa).

The region spanning 1–124 (MLGWVITCHD…RIVELGAPEV (124 aa)) is the PTS EIIA type-4 domain. Catalysis depends on histidine 9, which acts as the Tele-phosphohistidine intermediate.

It localises to the cytoplasm. Functionally, the phosphoenolpyruvate-dependent sugar phosphotransferase system (sugar PTS), a major carbohydrate active -transport system, catalyzes the phosphorylation of incoming sugar substrates concomitantly with their translocation across the cell membrane. This is Putative phosphotransferase enzyme IIA component YadI (yadI) from Escherichia coli (strain K12).